Consider the following 302-residue polypeptide: Sulfate adenylyltransferase subunit 2 (302 aa).

It belongs to the PAPS reductase family. CysD subfamily. As to quaternary structure, heterodimer composed of CysD, the smaller subunit, and CysN.

The catalysed reaction is sulfate + ATP + H(+) = adenosine 5'-phosphosulfate + diphosphate. Its pathway is sulfur metabolism; hydrogen sulfide biosynthesis; sulfite from sulfate: step 1/3. Its function is as follows. With CysN forms the ATP sulfurylase (ATPS) that catalyzes the adenylation of sulfate producing adenosine 5'-phosphosulfate (APS) and diphosphate, the first enzymatic step in sulfur assimilation pathway. APS synthesis involves the formation of a high-energy phosphoric-sulfuric acid anhydride bond driven by GTP hydrolysis by CysN coupled to ATP hydrolysis by CysD. In Escherichia coli O81 (strain ED1a), this protein is Sulfate adenylyltransferase subunit 2.